The primary structure comprises 110 residues: Large ribosomal subunit protein uL22 (110 aa).

The protein belongs to the universal ribosomal protein uL22 family. As to quaternary structure, part of the 50S ribosomal subunit.

This protein binds specifically to 23S rRNA; its binding is stimulated by other ribosomal proteins, e.g. L4, L17, and L20. It is important during the early stages of 50S assembly. It makes multiple contacts with different domains of the 23S rRNA in the assembled 50S subunit and ribosome. In terms of biological role, the globular domain of the protein is located near the polypeptide exit tunnel on the outside of the subunit, while an extended beta-hairpin is found that lines the wall of the exit tunnel in the center of the 70S ribosome. The sequence is that of Large ribosomal subunit protein uL22 from Mycoplasma mobile (strain ATCC 43663 / 163K / NCTC 11711) (Mesomycoplasma mobile).